The primary structure comprises 245 residues: Adenylate kinase (245 aa).

15-20 is an ATP binding site; sequence GSGKGT. The interval 35–64 is NMP; the sequence is SSGDLLRGAVSKDTPLSQEIKSYLDQGKLL. Residues S36, R41, 62–64, 103–106, and Q110 each bind AMP; these read KLL and GFPR. Positions 143–176 are LID; it reads SRYICPACQGIYNEQQGFSSCPKCSVELIRRSDD. R144 is an ATP binding site. 2 residues coordinate Zn(2+): C147 and C150. 153-154 is a binding site for ATP; that stretch reads IY. Zn(2+) contacts are provided by C163 and C166. R173 and R184 together coordinate AMP. Residue A212 participates in ATP binding.

It belongs to the adenylate kinase family. In terms of assembly, monomer.

It is found in the cytoplasm. The catalysed reaction is AMP + ATP = 2 ADP. It participates in purine metabolism; AMP biosynthesis via salvage pathway; AMP from ADP: step 1/1. Its function is as follows. Catalyzes the reversible transfer of the terminal phosphate group between ATP and AMP. Plays an important role in cellular energy homeostasis and in adenine nucleotide metabolism. This chain is Adenylate kinase, found in Chlamydia trachomatis serovar L2 (strain ATCC VR-902B / DSM 19102 / 434/Bu).